The following is a 441-amino-acid chain: Keratin, type I cytoskeletal 15 (441 aa).

Residues 2-91 are head; sequence LLLGHASTST…GGSDLLLGTS (90 aa). The segment at 92–127 is coil 1A; the sequence is GKEAMQNLNDRLASYLDKVRSLEGKNHELELKIKDW. The region spanning 92–407 is the IF rod domain; that stretch reads GKEAMQNLND…MLLDSEDSKG (316 aa). Residues 128–149 are linker 1; sequence YSQVIPGTGGPDARDYGHLEKE. The segment at 150–241 is coil 1B; that stretch reads IEDLQNKVNN…KNHEEDMKAA (92 aa). Residues 242-261 are linker 12; sequence SSGIAGQVNVELDAAPGTNL. The segment at 262 to 403 is coil 2; the sequence is LDELDACRRD…ATYRMLLDSE (142 aa). Residues 404–441 form a tail region; the sequence is DSKGSIINHKILTAIEKLVDGIVLSTEVLEKQIPVLSY.

The protein belongs to the intermediate filament family. In terms of assembly, heterotetramer of two type I and two type II keratins. In terms of tissue distribution, expressed in skin.

The chain is Keratin, type I cytoskeletal 15 (KRT15) from Protopterus aethiopicus (Marbled lungfish).